Reading from the N-terminus, the 290-residue chain is ATP synthase subunit a (290 aa).

6 helical membrane-spanning segments follow: residues 44 to 64 (AFHV…ILLF), 104 to 124 (VIAP…AIDL), 161 to 181 (LSVF…GGFI), 194 to 214 (ILVQ…TLVA), 233 to 253 (VFIL…GMGV), and 260 to 280 (AVFH…LTIV).

This sequence belongs to the ATPase A chain family. In terms of assembly, F-type ATPases have 2 components, CF(1) - the catalytic core - and CF(0) - the membrane proton channel. CF(1) has five subunits: alpha(3), beta(3), gamma(1), delta(1), epsilon(1). CF(0) has three main subunits: a(1), b(2) and c(9-12). The alpha and beta chains form an alternating ring which encloses part of the gamma chain. CF(1) is attached to CF(0) by a central stalk formed by the gamma and epsilon chains, while a peripheral stalk is formed by the delta and b chains.

The protein localises to the cell inner membrane. Functionally, key component of the proton channel; it plays a direct role in the translocation of protons across the membrane. This chain is ATP synthase subunit a, found in Pseudomonas fluorescens (strain ATCC BAA-477 / NRRL B-23932 / Pf-5).